Here is a 125-residue protein sequence, read N- to C-terminus: Unclassified hydrophobin 8 (125 aa).

Residues 1 to 20 (MMFSKPVVLATTALATFAAA) form the signal peptide. Disulfide bonds link C31/C105, C38/C99, C39/C90, and C106/C119.

This sequence belongs to the fungal hydrophobin family. In terms of assembly, self-assembles to form functional amyloid fibrils called rodlets. Self-assembly into fibrillar rodlets occurs spontaneously at hydrophobic:hydrophilic interfaces and the rodlets further associate laterally to form amphipathic monolayers.

The protein localises to the secreted. Its subcellular location is the cell wall. Aerial growth, conidiation, and dispersal of filamentous fungi in the environment rely upon a capability of their secreting small amphipathic proteins called hydrophobins (HPBs) with low sequence identity. Class I can self-assemble into an outermost layer of rodlet bundles on aerial cell surfaces, conferring cellular hydrophobicity that supports fungal growth, development and dispersal; whereas Class II form highly ordered films at water-air interfaces through intermolecular interactions but contribute nothing to the rodlet structure. Hydph8 is an unclassified hydrophobin involved in mycelial growth. This Pleurotus ostreatus (strain PC15) (Oyster mushroom) protein is Unclassified hydrophobin 8.